Here is a 501-residue protein sequence, read N- to C-terminus: NAD(P)H-quinone oxidoreductase chain 4, chloroplastic (501 aa).

The next 14 membrane-spanning stretches (helical) occupy residues 5-25 (FPWLTIIVVLPIFAASSIFFL), 38-58 (TCICLTELLLTTYVFCYHFQL), 88-108 (IGPILLTGFITTLATLAAWPV), 114-131 (LFYLLMLVMYSGQIGLFS), 135-155 (LLLFFIMWELELIPVYLLLSM), 168-188 (FILYTAGGSVFLLIGVLGMGL), 209-229 (ALEIIFYFGFLIAYAVKSPII), 243-263 (HYSTCMLLAGILLKMGAYGLI), 273-293 (AHSLFSPWLVIVGTIQIIYAA), 306-326 (IACSSVSHMGFIIIGIGSITD), 331-351 (GAILQILSHGFIGAALFFLSG), 387-407 (LALPGMSGFVAELVVFLGIIT), 417-437 (ILITFVMAIGMILTPIYLLSM), and 464-484 (FVSICIFLPVIGIGIYPDCVF).

The protein belongs to the complex I subunit 4 family.

The protein resides in the plastid. It localises to the chloroplast thylakoid membrane. The catalysed reaction is a plastoquinone + NADH + (n+1) H(+)(in) = a plastoquinol + NAD(+) + n H(+)(out). It catalyses the reaction a plastoquinone + NADPH + (n+1) H(+)(in) = a plastoquinol + NADP(+) + n H(+)(out). In Dioscorea elephantipes (Elephant's foot yam), this protein is NAD(P)H-quinone oxidoreductase chain 4, chloroplastic.